The following is a 2105-amino-acid chain: Autophagy-related protein 2 (2105 aa).

Disordered regions lie at residues 108-199 (ASSG…ELGI), 312-384 (LKSP…GRFS), 432-538 (FQSS…SVVE), 573-650 (GWES…KSPS), and 2086-2105 (AGNS…YKRH). 2 stretches are compositionally biased toward basic and acidic residues: residues 111-121 (GDDRELCRPFD) and 163-172 (SEPKEEKAEL). Low complexity-rich tracts occupy residues 336–352 (SSPA…LVMS) and 434–443 (SSPPSISDPT). Composition is skewed to polar residues over residues 471–482 (MESSTHSTNHPS), 509–534 (SDNV…SESA), 584–606 (RNVS…TSEG), and 632–641 (LLSNPNQSGL). Basic and acidic residues predominate over residues 2093–2105 (TNRRRVEDKYKRH).

The protein belongs to the ATG2 family.

It localises to the preautophagosomal structure membrane. Its subcellular location is the endoplasmic reticulum membrane. The catalysed reaction is a 1,2-diacyl-sn-glycero-3-phosphocholine(in) = a 1,2-diacyl-sn-glycero-3-phosphocholine(out). It carries out the reaction a 1,2-diacyl-sn-glycero-3-phospho-L-serine(in) = a 1,2-diacyl-sn-glycero-3-phospho-L-serine(out). It catalyses the reaction a 1,2-diacyl-sn-glycero-3-phosphoethanolamine(in) = a 1,2-diacyl-sn-glycero-3-phosphoethanolamine(out). Functionally, lipid transfer protein required for autophagosome completion and peroxisome degradation. Tethers the edge of the isolation membrane (IM) to the endoplasmic reticulum (ER) and mediates direct lipid transfer from ER to IM for IM expansion. ATG2 binds to the ER exit site (ERES), which is the membrane source for autophagosome formation, using basic residues in its N-terminal region (NR) and to the expanding edge of the IM through its C-terminal region. The latter binding is assisted by an ATG18-PtdIns3P interaction. ATG2 then extracts phospholipids from the membrane source using its NR and transfers them to ATG9 to the IM through its predicted beta-sheet-rich structure for membrane expansion. The polypeptide is Autophagy-related protein 2 (ATG2) (Ajellomyces capsulatus (strain NAm1 / WU24) (Darling's disease fungus)).